The primary structure comprises 184 residues: ATP synthase subunit b, chloroplastic (184 aa).

A helical membrane pass occupies residues L27 to L49.

It belongs to the ATPase B chain family. F-type ATPases have 2 components, F(1) - the catalytic core - and F(0) - the membrane proton channel. F(1) has five subunits: alpha(3), beta(3), gamma(1), delta(1), epsilon(1). F(0) has four main subunits: a(1), b(1), b'(1) and c(10-14). The alpha and beta chains form an alternating ring which encloses part of the gamma chain. F(1) is attached to F(0) by a central stalk formed by the gamma and epsilon chains, while a peripheral stalk is formed by the delta, b and b' chains.

It is found in the plastid. The protein resides in the chloroplast thylakoid membrane. In terms of biological role, f(1)F(0) ATP synthase produces ATP from ADP in the presence of a proton or sodium gradient. F-type ATPases consist of two structural domains, F(1) containing the extramembraneous catalytic core and F(0) containing the membrane proton channel, linked together by a central stalk and a peripheral stalk. During catalysis, ATP synthesis in the catalytic domain of F(1) is coupled via a rotary mechanism of the central stalk subunits to proton translocation. Its function is as follows. Component of the F(0) channel, it forms part of the peripheral stalk, linking F(1) to F(0). In Ceratophyllum demersum (Rigid hornwort), this protein is ATP synthase subunit b, chloroplastic.